The chain runs to 554 residues: Serine/threonine-protein phosphatase 2B catalytic subunit (554 aa).

3 residues coordinate Fe cation: Asp119, His121, and Asp147. Residues Asp147 and Asn179 each coordinate Zn(2+). His180 serves as the catalytic Proton donor. The Zn(2+) site is built by His228 and His310. Positions 411 to 433 (LKESAPTQHKQPAPSENENKADQ) are disordered. A compositionally biased stretch (polar residues) spans 415–426 (APTQHKQPAPSE).

This sequence belongs to the PPP phosphatase family. PP-2B subfamily. In terms of assembly, composed of two components (A and B), the A component is the catalytic subunit and the B component confers calcium sensitivity. The cofactor is Fe(3+). It depends on Zn(2+) as a cofactor.

The enzyme catalyses O-phospho-L-seryl-[protein] + H2O = L-seryl-[protein] + phosphate. The catalysed reaction is O-phospho-L-threonyl-[protein] + H2O = L-threonyl-[protein] + phosphate. In terms of biological role, calcium-dependent, calmodulin-stimulated protein phosphatase. This subunit may have a role in the calmodulin activation of calcineurin. Appears to be involved in cytokinesis, mating, transport, nuclear and spindle pole body positioning, and cell shape. In Schizosaccharomyces pombe (strain 972 / ATCC 24843) (Fission yeast), this protein is Serine/threonine-protein phosphatase 2B catalytic subunit (ppb1).